A 1551-amino-acid polypeptide reads, in one-letter code: Envelopment polyprotein (1551 aa).

Residues 1 to 17 form the signal peptide; the sequence is MSKRVLIIAVVVYLVFT. Residues 18 to 546 lie on the Lumenal side of the membrane; it reads TQNQITGNHT…CRMSSRPTVA (529 aa). The segment at 24-66 is disordered; that stretch reads GNHTTINSSSPSTTEASSTPTVSRTPQTTTTSTAVSTTITATT. Residues Asn25 and Asn30 are each glycosylated (N-linked (GlcNAc...) asparagine; by host). Positions 31 to 66 are enriched in low complexity; the sequence is SSSPSTTEASSTPTVSRTPQTTTTSTAVSTTITATT. 3 N-linked (GlcNAc...) asparagine; by host glycosylation sites follow: Asn80, Asn142, and Asn413. The helical transmembrane segment at 547–567 threads the bilayer; that stretch reads LLLGIWIGCGYILTCIFSFLL. Topologically, residues 568–675 are cytoplasmic; it reads YHLILFFANC…ISVGIFLKRT (108 aa). A helical transmembrane segment spans residues 676-696; that stretch reads TWLVVLLVLLGLAISPVQGAP. Over 697–704 the chain is Lumenal; it reads TEVSNVKQ. Residues 705-725 form a helical membrane-spanning segment; the sequence is DGDYSICYFIFGCLVTAALLL. At 726–823 the chain is on the cytoplasmic side; sequence KVKRTNSNGI…REKLFTTGLQ (98 aa). A helical membrane pass occupies residues 824-844; sequence LFINKTNVVVFALIMCFLLLL. Residues 845 to 1451 are Lumenal-facing; it reads TGHNASAFDS…GDFFKHYIGS (607 aa). Residues Asn848, Asn1201, Asn1258, and Asn1420 are each glycosylated (N-linked (GlcNAc...) asparagine; by host). Cysteines 1023 and 1216 form a disulfide. The chain crosses the membrane as a helical span at residues 1452–1472; sequence IAVGVLGTVLPFALLILFFIY. Residues 1473-1551 lie on the Cytoplasmic side of the membrane; sequence GDKMLWPFKV…KKEKKLSEIA (79 aa).

This sequence belongs to the nairovirus envelope glycoprotein family. Heterodimer with glycoprotein C; in prefusion state. In terms of assembly, heterodimer with glycoprotein N; in prefusion state. Homotrimeric; in postfusion state. In terms of processing, specific enzymatic cleavage by host MBTPS1/S1P/SKI-1 endopeptidase yield glycoprotein N. Specific enzymatic cleavages by host furin-like protease and MBTPS1/S1P endopeptidase yield GP38. Post-translationally, glycosylated.

Its subcellular location is the host endoplasmic reticulum membrane. The protein localises to the virion membrane. It is found in the host Golgi apparatus membrane. Functionally, glycoprotein N and glycoprotein C interact with each other and are present at the surface of the virion. Glycoprotein N probably locks the Gn-Gc complex in a prefusion state. Glycoprotein N and glycoprotein C are able to attach the virion to host cell receptors. This attachment induces virion internalization predominantly through clathrin-dependent endocytosis. Its function is as follows. Glycoprotein C and glycoprotein N interact with each other and are present at the surface of the virion. The spikes at the surface of the virion are formed by an N-terminal extension of glycoprotein C. Glycoprotein N and glycoprotein C are able to attach the virion to host cell receptors. This attachment induces virion internalization predominantly through clathrin-dependent endocytosis. Class II fusion protein that promotes fusion of viral membrane with host endosomal membrane after endocytosis of the virion. Exposure to potassium is necessary for the conformational change leading to fusion. In Amblyomma variegatum (Tropical bont tick), this protein is Envelopment polyprotein (GP).